Reading from the N-terminus, the 164-residue chain is Shikimate kinase (164 aa).

10–15 (GVGKTT) lines the ATP pocket. Mg(2+) is bound at residue Thr-14. Substrate contacts are provided by Asp-28, Arg-52, and Gly-75. Arg-116 provides a ligand contact to ATP. A substrate-binding site is contributed by Arg-134. Arg-151 contributes to the ATP binding site.

The protein belongs to the shikimate kinase family. Monomer. Mg(2+) serves as cofactor.

The protein localises to the cytoplasm. The enzyme catalyses shikimate + ATP = 3-phosphoshikimate + ADP + H(+). It participates in metabolic intermediate biosynthesis; chorismate biosynthesis; chorismate from D-erythrose 4-phosphate and phosphoenolpyruvate: step 5/7. Its function is as follows. Catalyzes the specific phosphorylation of the 3-hydroxyl group of shikimic acid using ATP as a cosubstrate. The polypeptide is Shikimate kinase (Streptococcus equi subsp. zooepidemicus (strain MGCS10565)).